Reading from the N-terminus, the 255-residue chain is Pyridoxine 5'-phosphate synthase (255 aa).

3-amino-2-oxopropyl phosphate is bound by residues Asn8 and Arg19. The active-site Proton acceptor is the His44. 2 residues coordinate 1-deoxy-D-xylulose 5-phosphate: Arg46 and His51. Glu74 functions as the Proton acceptor in the catalytic mechanism. Thr111 lines the 1-deoxy-D-xylulose 5-phosphate pocket. His202 functions as the Proton donor in the catalytic mechanism. Residues Asp203 and 225–226 (GH) each bind 3-amino-2-oxopropyl phosphate.

It belongs to the PNP synthase family. As to quaternary structure, homooctamer; tetramer of dimers.

The protein localises to the cytoplasm. It carries out the reaction 3-amino-2-oxopropyl phosphate + 1-deoxy-D-xylulose 5-phosphate = pyridoxine 5'-phosphate + phosphate + 2 H2O + H(+). The protein operates within cofactor biosynthesis; pyridoxine 5'-phosphate biosynthesis; pyridoxine 5'-phosphate from D-erythrose 4-phosphate: step 5/5. Catalyzes the complicated ring closure reaction between the two acyclic compounds 1-deoxy-D-xylulose-5-phosphate (DXP) and 3-amino-2-oxopropyl phosphate (1-amino-acetone-3-phosphate or AAP) to form pyridoxine 5'-phosphate (PNP) and inorganic phosphate. This chain is Pyridoxine 5'-phosphate synthase, found in Xanthomonas oryzae pv. oryzae (strain PXO99A).